Reading from the N-terminus, the 356-residue chain is Naringenin,2-oxoglutarate 3-dioxygenase (356 aa).

The Fe2OG dioxygenase domain maps to 188-292 (CVDMDQKVVV…RLSIATFQNP (105 aa)). Histidine 215, aspartate 217, and histidine 273 together coordinate Fe cation. Arginine 283 contacts 2-oxoglutarate.

This sequence belongs to the iron/ascorbate-dependent oxidoreductase family. It depends on Fe(2+) as a cofactor. L-ascorbate serves as cofactor.

The catalysed reaction is a (2S)-flavan-4-one + 2-oxoglutarate + O2 = a (2R,3R)-dihydroflavonol + succinate + CO2. It participates in secondary metabolite biosynthesis; flavonoid biosynthesis. Catalyzes the 3-beta-hydroxylation of 2S-flavanones to 2R,3R-dihydroflavonols which are intermediates in the biosynthesis of flavonols, anthocyanidins, catechins and proanthocyanidins in plants. The protein is Naringenin,2-oxoglutarate 3-dioxygenase (FHT) of Callistephus chinensis (China aster).